The following is an 83-amino-acid chain: MRFIILGVLFIAVASMILSNGVMAQSRDFSISEREIVASLAKQLLRVARMGYVPEGDLPRKRNAELINSLLGVPRVMSDAGRR.

Positions 1–24 are cleaved as a signal peptide; that stretch reads MRFIILGVLFIAVASMILSNGVMA. A80 bears the Alanine amide mark.

Belongs to the arthropod PDH family. Strongly expressed in eyestalk tissue and cerebral ganglia (at protein level).

It localises to the secreted. The pigment-dispersing hormone causes the migration of the distal retinal pigment into the proximal end of the pigment chromatophore cells and thus decreases the amount of light entering the retinulas. May also function as a neurotransmitter and/or neuromodulator. The protein is Pigment-dispersing hormone peptides of Eurydice pulchra (Speckled sea louse).